The chain runs to 372 residues: Glutamate 5-kinase (372 aa).

An ATP-binding site is contributed by Lys14. Positions 54, 141, and 153 each coordinate substrate. 173-174 is an ATP binding site; the sequence is TD. A PUA domain is found at 280 to 358; the sequence is RGTLVLDEGA…DAIVGVLGYM (79 aa).

It belongs to the glutamate 5-kinase family.

Its subcellular location is the cytoplasm. It catalyses the reaction L-glutamate + ATP = L-glutamyl 5-phosphate + ADP. It functions in the pathway amino-acid biosynthesis; L-proline biosynthesis; L-glutamate 5-semialdehyde from L-glutamate: step 1/2. Functionally, catalyzes the transfer of a phosphate group to glutamate to form L-glutamate 5-phosphate. In Pseudomonas fluorescens (strain ATCC BAA-477 / NRRL B-23932 / Pf-5), this protein is Glutamate 5-kinase.